We begin with the raw amino-acid sequence, 635 residues long: ATP-dependent zinc metalloprotease FtsH (635 aa).

The Cytoplasmic portion of the chain corresponds to 1–6 (MNNQGR). A helical membrane pass occupies residues 7 to 27 (SILTWAALFVFVILLFNVFQS). Residues 28–103 (DGLLGGRNNI…VVPLETRMNT (76 aa)) lie on the Periplasmic side of the membrane. Residues 104–124 (FLGFLISWFPMLLLIGVWVFF) traverse the membrane as a helical segment. Residues 125–635 (MRQMHGGGKA…KKAKKESTNI (511 aa)) lie on the Cytoplasmic side of the membrane. 195 to 202 (GPPGTGKT) serves as a coordination point for ATP. His417 serves as a coordination point for Zn(2+). The active site involves Glu418. Positions 421 and 495 each coordinate Zn(2+). Residues 600–635 (SEEENKFPFNDSPTIKIDKEKSPEKAKKAKKESTNI) form a disordered region. The segment covering 615 to 635 (KIDKEKSPEKAKKAKKESTNI) has biased composition (basic and acidic residues).

The protein in the central section; belongs to the AAA ATPase family. This sequence in the C-terminal section; belongs to the peptidase M41 family. In terms of assembly, homohexamer. The cofactor is Zn(2+).

The protein localises to the cell inner membrane. Its function is as follows. Acts as a processive, ATP-dependent zinc metallopeptidase for both cytoplasmic and membrane proteins. Plays a role in the quality control of integral membrane proteins. This is ATP-dependent zinc metalloprotease FtsH from Rickettsia felis (strain ATCC VR-1525 / URRWXCal2) (Rickettsia azadi).